A 165-amino-acid polypeptide reads, in one-letter code: Fatty acid-binding protein homolog 3 (165 aa).

The N-terminal stretch at 1-19 is a signal peptide; sequence MNLYLTLFSFCFLAIMAEA.

The protein belongs to the calycin superfamily. Fatty-acid binding protein (FABP) family. As to expression, expressed in presumptive hypodermal cells by the comma stage and in posterior body wall muscle cells by the two-fold stage. From L1 to adult stages, expression continues in body wall muscle cells adjacent to the pseudocoelom, while hypodermal expression is extinguished.

It localises to the secreted. Functionally, may play a role in sequestering potentially toxic fatty acids and their peroxidation products, or it may be involved in the maintenance of the impermeable lipid layer of the eggshell. The sequence is that of Fatty acid-binding protein homolog 3 (lbp-3) from Caenorhabditis elegans.